The primary structure comprises 415 residues: F-box protein ETP1 (415 aa).

The F-box domain occupies 1–46 (MTIPDLCNDLVDEILCRVPARNLKRLRSTSKRWNRLFKDDRRFARE).

In terms of assembly, interacts with EIN2 (via C-terminus).

Negative regulator of EIN2 protein stability. In Arabidopsis thaliana (Mouse-ear cress), this protein is F-box protein ETP1.